The sequence spans 318 residues: NADH-ubiquinone oxidoreductase chain 1 (318 aa).

Helical transmembrane passes span 2 to 22, 70 to 90, 102 to 122, 147 to 167, 171 to 191, 222 to 242, 253 to 273, and 294 to 314; these read FLTNLLMTIAPVLLAVAFLTL, MFLMAPTLALALALTMWIPLP, LLFMLAMSSLAVYAILWSGWA, AIILLSVLLLSGSYSLSTLII, YMWLILPSWPLAMMWFISTLA, LFFLAEYTNIIMMNALTTILF, ELYTINFTTKTLLLTMAFLWI, and LPLTLALCMWYTALPIITAAI.

Belongs to the complex I subunit 1 family.

Its subcellular location is the mitochondrion inner membrane. The enzyme catalyses a ubiquinone + NADH + 5 H(+)(in) = a ubiquinol + NAD(+) + 4 H(+)(out). Its function is as follows. Core subunit of the mitochondrial membrane respiratory chain NADH dehydrogenase (Complex I) that is believed to belong to the minimal assembly required for catalysis. Complex I functions in the transfer of electrons from NADH to the respiratory chain. The immediate electron acceptor for the enzyme is believed to be ubiquinone. The protein is NADH-ubiquinone oxidoreductase chain 1 (MT-ND1) of Diaemus youngi (White-winged vampire bat).